Here is a 642-residue protein sequence, read N- to C-terminus: MHGLLLAGLLALPLNVLAHPTESHSSGISRRAIDITSYRLPQISKYTKSDSLTGQDGQSFTASSADADTSSGDYVSTATNWLKKTLPNASYRLVNDHYIGDSGIGHVHFRQTAHGIDIDNTDFNVNIGRDGKVFSFGNSFYDGEIPKANPMVKRDFSDPVDALHGAIQTLNIPVTAKPENVKAKPVEGKESFKFEGTSGALSDPKAQLVYLQKDGGLVLSWKVETDVGDNWLLSYVDANDKGKVHSVVDYVSAAAYEVYPWGINDPTEGKRSTIHVPWFKTQSVDWHIDGKNWYPTTRGNNAIAQENPTGQREYENNYRPKSPLFIFKYPYSEAMSPPSSYRDASITQLFYTTNVFHDVLYILGFNEKAGNFQTNNWNKGGLGGDYAILNSQDGSGVNNANFATPPDGEPGRMRMYNWNASTPERDGCFEAGIVIHEYTHGVSNRLTGGPANSRCLAALESGGMGEGWSDFFATAIRLKNGDTRATDYTMGEWASNRPNGIRKYRYSTNLTTNPHMYVDADGLTSVHAIGTIWASMLYEMLWNLIDKHGKGDVSKVKPTLKNGVPTDGRHLAMKIVLDGMALQPCLPNFVQARDAIIDADKNLTGGSNKCEIWKAFAKRGLGVGAVYNPSKRTGSNELPAGC.

A signal peptide spans 1–18; the sequence is MHGLLLAGLLALPLNVLA. The propeptide occupies 19–253; the sequence is HPTESHSSGI…VHSVVDYVSA (235 aa). Polar residues predominate over residues 49–60; it reads SDSLTGQDGQSF. The disordered stretch occupies residues 49-72; it reads SDSLTGQDGQSFTASSADADTSSG. A compositionally biased stretch (low complexity) spans 61 to 71; the sequence is TASSADADTSS. A glycan (N-linked (GlcNAc...) asparagine) is linked at asparagine 419. Residue histidine 436 participates in Zn(2+) binding. The active site involves glutamate 437. Histidine 440 lines the Zn(2+) pocket. 2 N-linked (GlcNAc...) asparagine glycosylation sites follow: asparagine 509 and asparagine 602.

Belongs to the peptidase M36 family. Zn(2+) is required as a cofactor.

It is found in the secreted. Secreted metalloproteinase that allows assimilation of proteinaceous substrates and probably acts as a virulence factor. This chain is Extracellular metalloproteinase 4 (MEP4), found in Arthroderma gypseum (strain ATCC MYA-4604 / CBS 118893) (Microsporum gypseum).